Consider the following 92-residue polypeptide: Neurophysin 2 (92 aa).

7 cysteine pairs are disulfide-bonded: C10-C54, C13-C27, C21-C44, C28-C34, C61-C73, C67-C85, and C74-C79.

The protein belongs to the vasopressin/oxytocin family. There is an equilibrium between the monomeric and dimeric forms. On peptide binding the dimeric form predominates. A shorter neurophysin molecule (1-90) also exists and is probably derived from the complete protein by proteolytic degradation (in vivo or after extraction).

The protein resides in the secreted. Neurophysin 2 specifically binds vasopressin. The chain is Neurophysin 2 (AVP) from Loxodonta africana (African elephant).